Reading from the N-terminus, the 21-residue chain is Cutinase 2 (21 aa).

This sequence belongs to the cutinase family.

The protein resides in the secreted. It carries out the reaction cutin + H2O = cutin monomers.. With respect to regulation, inhibited by diisopropyl fluorophosphate (DFP). Its function is as follows. Catalyzes the hydrolysis of complex carboxylic polyesters found in the cell wall of plants. Degrades cutin, a macromolecule that forms the structure of the plant cuticle. Allows pathogenic fungi to penetrate through the cuticular barrier into the host plant during the initial stage of fungal infection. In Colletotrichum gloeosporioides (Anthracnose fungus), this protein is Cutinase 2.